Here is a 20-residue protein sequence, read N- to C-terminus: GADFQECMKEHSQKQHQHQG.

The span at 1-13 (GADFQECMKEHSQ) shows a compositional bias: basic and acidic residues. Positions 1-20 (GADFQECMKEHSQKQHQHQG) are disordered.

Possesses antifungal activity against B.cinerea, M.arachidicola and F.oxysporum but not C.comatus and R.solani. Inhibits HIV-1 reverse transcriptase and cell-free translation. This Basella alba (Malabar spinach) protein is Alpha-basrubrin.